The primary structure comprises 316 residues: Pantothenate kinase (316 aa).

ATP is bound at residue 95–102 (GSVAVGKS).

This sequence belongs to the prokaryotic pantothenate kinase family.

The protein resides in the cytoplasm. The enzyme catalyses (R)-pantothenate + ATP = (R)-4'-phosphopantothenate + ADP + H(+). It functions in the pathway cofactor biosynthesis; coenzyme A biosynthesis; CoA from (R)-pantothenate: step 1/5. This chain is Pantothenate kinase, found in Serratia proteamaculans (strain 568).